Here is a 281-residue protein sequence, read N- to C-terminus: uncharacterized protein (281 aa).

2 disordered regions span residues 192-212 (SNSS…IQET) and 227-281 (EDYV…SEEY). The segment covering 200–211 (MDKKSDDSKIQE) has biased composition (basic and acidic residues). Composition is skewed to acidic residues over residues 227–240 (EDYV…ISDN) and 249–260 (DTDSDLGDLEDP).

Belongs to the cullin family.

This is an uncharacterized protein from Acanthamoeba polyphaga (Amoeba).